Here is a 352-residue protein sequence, read N- to C-terminus: Nicotinate-nucleotide--dimethylbenzimidazole phosphoribosyltransferase (352 aa).

Glu-316 functions as the Proton acceptor in the catalytic mechanism.

It belongs to the CobT family.

The enzyme catalyses 5,6-dimethylbenzimidazole + nicotinate beta-D-ribonucleotide = alpha-ribazole 5'-phosphate + nicotinate + H(+). It functions in the pathway nucleoside biosynthesis; alpha-ribazole biosynthesis; alpha-ribazole from 5,6-dimethylbenzimidazole: step 1/2. Its function is as follows. Catalyzes the synthesis of alpha-ribazole-5'-phosphate from nicotinate mononucleotide (NAMN) and 5,6-dimethylbenzimidazole (DMB). In Ruminiclostridium cellulolyticum (strain ATCC 35319 / DSM 5812 / JCM 6584 / H10) (Clostridium cellulolyticum), this protein is Nicotinate-nucleotide--dimethylbenzimidazole phosphoribosyltransferase.